The primary structure comprises 279 residues: Energy-coupling factor transporter ATP-binding protein EcfA (279 aa).

Residues 5 to 240 form the ABC transporter domain; the sequence is IELEKINYKY…GPELIDLGLD (236 aa). 40-47 lines the ATP pocket; it reads GHNGSGKS.

The protein belongs to the ABC transporter superfamily. Energy-coupling factor EcfA family. In terms of assembly, forms a stable energy-coupling factor (ECF) transporter complex composed of 2 membrane-embedded substrate-binding proteins (S component), 2 ATP-binding proteins (A component) and 2 transmembrane proteins (T component).

The protein resides in the cell membrane. Functionally, ATP-binding (A) component of a common energy-coupling factor (ECF) ABC-transporter complex. Unlike classic ABC transporters this ECF transporter provides the energy necessary to transport a number of different substrates. The polypeptide is Energy-coupling factor transporter ATP-binding protein EcfA (Enterococcus faecium (Streptococcus faecium)).